Here is a 64-residue protein sequence, read N- to C-terminus: Ferredoxin-like protein in nif region (64 aa).

The region spanning 2-30 (AFKIIASQCTQCGACEFECPSGAISFKTD) is the 4Fe-4S ferredoxin-type domain. C10, C13, C16, C20, C39, C42, C51, and C55 together coordinate [4Fe-4S] cluster.

Requires [4Fe-4S] cluster as cofactor.

This is Ferredoxin-like protein in nif region (fdxN) from Rhizobium leguminosarum bv. trifolii.